A 249-amino-acid polypeptide reads, in one-letter code: Adenylate kinase (249 aa).

43–48 (GAGKGT) contributes to the ATP binding site. An NMP region spans residues 63 to 92 (ATGDMLRAQVAAKTALGVEAKKIMDQGGLV). AMP contacts are provided by residues T64, R69, 90–92 (GLV), 119–122 (GFPR), and Q126. Residues 160-197 (GRLVHPASGRSYHKLFNPPKKDMTDDVTGEPLVQRSDD) are LID. ATP contacts are provided by residues R161 and 170–171 (SY). A disordered region spans residues 177 to 197 (PPKKDMTDDVTGEPLVQRSDD). Residues R194 and R205 each contribute to the AMP site. ATP is bound at residue Q233.

Belongs to the adenylate kinase family. AK2 subfamily. As to quaternary structure, monomer.

The protein resides in the cytoplasm. It is found in the cytosol. It localises to the mitochondrion intermembrane space. The catalysed reaction is AMP + ATP = 2 ADP. Functionally, catalyzes the reversible transfer of the terminal phosphate group between ATP and AMP. Plays an important role in cellular energy homeostasis and in adenine nucleotide metabolism. Adenylate kinase activity is critical for regulation of the phosphate utilization and the AMP de novo biosynthesis pathways. The protein is Adenylate kinase of Candida albicans (strain SC5314 / ATCC MYA-2876) (Yeast).